Consider the following 344-residue polypeptide: Sulfate/thiosulfate import ATP-binding protein CysA (344 aa).

Residues 3 to 237 (IEVRNLVKKF…PATAFVHGFI (235 aa)) form the ABC transporter domain. An ATP-binding site is contributed by 35 to 42 (GPSGSGKT).

The protein belongs to the ABC transporter superfamily. Sulfate/tungstate importer (TC 3.A.1.6) family. As to quaternary structure, the complex is composed of two ATP-binding proteins (CysA), two transmembrane proteins (CysT and CysW) and a solute-binding protein (CysP).

It localises to the cell inner membrane. The catalysed reaction is sulfate(out) + ATP + H2O = sulfate(in) + ADP + phosphate + H(+). The enzyme catalyses thiosulfate(out) + ATP + H2O = thiosulfate(in) + ADP + phosphate + H(+). Part of the ABC transporter complex CysAWTP involved in sulfate/thiosulfate import. Responsible for energy coupling to the transport system. The chain is Sulfate/thiosulfate import ATP-binding protein CysA from Bradyrhizobium diazoefficiens (strain JCM 10833 / BCRC 13528 / IAM 13628 / NBRC 14792 / USDA 110).